The following is a 168-amino-acid chain: Large ribosomal subunit protein uL10 (168 aa).

It belongs to the universal ribosomal protein uL10 family. As to quaternary structure, part of the ribosomal stalk of the 50S ribosomal subunit. The N-terminus interacts with L11 and the large rRNA to form the base of the stalk. The C-terminus forms an elongated spine to which L12 dimers bind in a sequential fashion forming a multimeric L10(L12)X complex.

Forms part of the ribosomal stalk, playing a central role in the interaction of the ribosome with GTP-bound translation factors. In Acidovorax ebreus (strain TPSY) (Diaphorobacter sp. (strain TPSY)), this protein is Large ribosomal subunit protein uL10.